We begin with the raw amino-acid sequence, 524 residues long: Excitatory amino acid transporter 3 (524 aa).

Residues 1–18 (MGKPARKGCDSKRFLKNN) lie on the Cytoplasmic side of the membrane. A helical transmembrane segment spans residues 19-38 (WLLLSTVVAVVLGIVIGVLV). The Extracellular segment spans residues 39 to 61 (REYSNLSTLDKFYFAFPGEILMR). N-linked (GlcNAc...) asparagine glycosylation is present at Asn43. The chain crosses the membrane as a helical span at residues 62–82 (MLKLVILPLIVSSMITGVAAL). The Cytoplasmic segment spans residues 83–93 (DSNVSGKIGLR). A helical membrane pass occupies residues 94–114 (AVLYYFCTTIIAVILGIVLVV). Residues Tyr98, Thr101, and Thr102 each coordinate Na(+). The Extracellular portion of the chain corresponds to 115–205 (SIKPGVTQKV…RTKEYRVVGL (91 aa)). N-linked (GlcNAc...) asparagine glycosylation is found at Asn178 and Asn195. Residues 206–229 (YSDGINVLGLIVFCLVFGLVIGKM) form a helical membrane-spanning segment. At 230–238 (GEKGQILVD) the chain is on the cytoplasmic side. A helical membrane pass occupies residues 239–266 (FFNALSDATMKIVQIIMCYMPLGILFLI). Topologically, residues 267-286 (AGKIIEVEDWEIFRKLGLYM) are extracellular. A helical membrane pass occupies residues 287–308 (VTVLSGLAIHSIVILPLIYFIV). At 309 to 313 (VRKNP) the chain is on the cytoplasmic side. An intramembrane region (discontinuously helical) is located at residues 314–344 (FRFAMGMTQALLTALMISSSSATLPVTFRCA). L-aspartate is bound by residues Ser331 and Ser333. Over 345–353 (EEKNRVDKR) the chain is Cytoplasmic. The chain crosses the membrane as a helical span at residues 354–380 (ITRFVLPVGATINMDGTALYEAVAAVF). Na(+) contacts are provided by Gly362, Thr364, Asn366, and Asp368. Thr370 contributes to the L-aspartate binding site. Over 381-393 (IAQLNDMDLSIGQ) the chain is Extracellular. The segment at residues 394-427 (IITISVTATAASIGAAGVPQAGLVTMVIVLSAVG) is an intramembrane region (discontinuously helical). Positions 405, 406, and 408 each coordinate Na(+). An L-aspartate-binding site is contributed by Val411. Residues 428–440 (LPAEDVTLIIAVD) are Extracellular-facing. Residues 441 to 462 (WLLDRFRTVVNVLGDAFGTGIV) form a helical membrane-spanning segment. Positions 447, 448, and 451 each coordinate L-aspartate. Positions 451 and 455 each coordinate Na(+). The Cytoplasmic portion of the chain corresponds to 463 to 524 (EKLSKKELEQ…TISFTQTSQF (62 aa)). Residues Ser517 and Ser522 each carry the phosphoserine modification.

The protein belongs to the dicarboxylate/amino acid:cation symporter (DAACS) (TC 2.A.23) family. SLC1A1 subfamily. In terms of assembly, homotrimer. Interacts with ARL6IP5. Interacts with RTN2 (via N-terminus); the interaction promotes cell surface expression of SLC1A1. Interacts with SORCS2; this interaction is important for normal expression at the cell membrane. As to expression, brain, but also small intestine, kidney, liver and heart.

The protein localises to the cell membrane. The protein resides in the apical cell membrane. Its subcellular location is the synapse. It is found in the synaptosome. It localises to the early endosome membrane. The protein localises to the late endosome membrane. The protein resides in the recycling endosome membrane. It catalyses the reaction K(+)(in) + L-glutamate(out) + 3 Na(+)(out) + H(+)(out) = K(+)(out) + L-glutamate(in) + 3 Na(+)(in) + H(+)(in). It carries out the reaction K(+)(in) + L-aspartate(out) + 3 Na(+)(out) + H(+)(out) = K(+)(out) + L-aspartate(in) + 3 Na(+)(in) + H(+)(in). The enzyme catalyses D-aspartate(out) + K(+)(in) + 3 Na(+)(out) + H(+)(out) = D-aspartate(in) + K(+)(out) + 3 Na(+)(in) + H(+)(in). The catalysed reaction is K(+)(in) + L-cysteine(out) + 3 Na(+)(out) + H(+)(out) = K(+)(out) + L-cysteine(in) + 3 Na(+)(in) + H(+)(in). Functionally, sodium-dependent, high-affinity amino acid transporter that mediates the uptake of L-glutamate and also L-aspartate and D-aspartate. Can also transport L-cysteine. Functions as a symporter that transports one amino acid molecule together with two or three Na(+) ions and one proton, in parallel with the counter-transport of one K(+) ion. Mediates Cl(-) flux that is not coupled to amino acid transport; this avoids the accumulation of negative charges due to aspartate and Na(+) symport. Plays an important role in L-glutamate and L-aspartate reabsorption in renal tubuli. Plays a redundant role in the rapid removal of released glutamate from the synaptic cleft, which is essential for terminating the postsynaptic action of glutamate. Contributes to glutathione biosynthesis and protection against oxidative stress via its role in L-glutamate and L-cysteine transport. Negatively regulated by ARL6IP5. The chain is Excitatory amino acid transporter 3 (SLC1A1) from Oryctolagus cuniculus (Rabbit).